An 85-amino-acid chain; its full sequence is Small ribosomal subunit protein uS17 (85 aa).

Belongs to the universal ribosomal protein uS17 family. In terms of assembly, part of the 30S ribosomal subunit.

One of the primary rRNA binding proteins, it binds specifically to the 5'-end of 16S ribosomal RNA. This is Small ribosomal subunit protein uS17 from Desulforudis audaxviator (strain MP104C).